Here is a 362-residue protein sequence, read N- to C-terminus: F-box protein At2g14710 (362 aa).

Residues 1–47 (MAHLKNLPWELIEEILSRVPPKSLVRFRTVSKQWNALFDDKTFINNH) form the F-box domain.

The protein is F-box protein At2g14710 of Arabidopsis thaliana (Mouse-ear cress).